Reading from the N-terminus, the 138-residue chain is Small ribosomal subunit protein uS11c (138 aa).

Residues 1–22 form a disordered region; the sequence is MAKSIPRISSRRNGPIGSGKTV.

Belongs to the universal ribosomal protein uS11 family. As to quaternary structure, part of the 30S ribosomal subunit.

It localises to the plastid. This Cuscuta exaltata (Tall dodder) protein is Small ribosomal subunit protein uS11c.